A 143-amino-acid chain; its full sequence is NADH-quinone oxidoreductase subunit A (143 aa).

3 consecutive transmembrane segments (helical) span residues 8 to 28 (FGNV…GYLT), 63 to 83 (FYVV…LFPW), and 93 to 113 (FALI…VYAW).

It belongs to the complex I subunit 3 family. In terms of assembly, NDH-1 is composed of 14 different subunits. Subunits NuoA, H, J, K, L, M, N constitute the membrane sector of the complex.

The protein resides in the cell inner membrane. The catalysed reaction is a quinone + NADH + 5 H(+)(in) = a quinol + NAD(+) + 4 H(+)(out). In terms of biological role, NDH-1 shuttles electrons from NADH, via FMN and iron-sulfur (Fe-S) centers, to quinones in the respiratory chain. The immediate electron acceptor for the enzyme in this species is believed to be a menaquinone. Couples the redox reaction to proton translocation (for every two electrons transferred, four hydrogen ions are translocated across the cytoplasmic membrane), and thus conserves the redox energy in a proton gradient. The chain is NADH-quinone oxidoreductase subunit A from Chlorobium luteolum (strain DSM 273 / BCRC 81028 / 2530) (Pelodictyon luteolum).